Consider the following 607-residue polypeptide: Glutamine--fructose-6-phosphate aminotransferase [isomerizing] (607 aa).

Residue Cys2 is the Nucleophile; for GATase activity of the active site. The Glutamine amidotransferase type-2 domain occupies 2–218; it reads CGIIGYSGSK…DGDVVLVTKD (217 aa). SIS domains follow at residues 280–424 and 457–597; these read FDEQ…KLGK and IAKK…VDKP. Lys602 functions as the For Fru-6P isomerization activity in the catalytic mechanism.

As to quaternary structure, homodimer.

Its subcellular location is the cytoplasm. It catalyses the reaction D-fructose 6-phosphate + L-glutamine = D-glucosamine 6-phosphate + L-glutamate. In terms of biological role, catalyzes the first step in hexosamine metabolism, converting fructose-6P into glucosamine-6P using glutamine as a nitrogen source. The sequence is that of Glutamine--fructose-6-phosphate aminotransferase [isomerizing] from Fusobacterium nucleatum subsp. nucleatum (strain ATCC 25586 / DSM 15643 / BCRC 10681 / CIP 101130 / JCM 8532 / KCTC 2640 / LMG 13131 / VPI 4355).